Here is a 38-residue protein sequence, read N- to C-terminus: Cytochrome b6-f complex subunit 5 (38 aa).

Residues 5–25 form a helical membrane-spanning segment; the sequence is LLCGIVLGLIPVTLLGLFVDA.

Belongs to the PetG family. As to quaternary structure, the 4 large subunits of the cytochrome b6-f complex are cytochrome b6, subunit IV (17 kDa polypeptide, PetD), cytochrome f and the Rieske protein, while the 4 small subunits are PetG, PetL, PetM and PetN. The complex functions as a dimer.

It is found in the cellular thylakoid membrane. Component of the cytochrome b6-f complex, which mediates electron transfer between photosystem II (PSII) and photosystem I (PSI), cyclic electron flow around PSI, and state transitions. PetG is required for either the stability or assembly of the cytochrome b6-f complex. The polypeptide is Cytochrome b6-f complex subunit 5 (Prochlorococcus marinus (strain MIT 9313)).